The sequence spans 811 residues: Auxin response factor 8 (811 aa).

The TF-B3 DNA-binding region spans 126 to 228 (FCKTLTASDT…QLFLGIRHAT (103 aa)). 2 disordered regions span residues 467–496 (HQYL…HLMH) and 544–565 (HLQQ…SDFT). 2 stretches are compositionally biased toward polar residues: residues 469–482 (YLQQ…DLML) and 544–555 (HLQQWQQQSEMP). A PB1 domain is found at 705–789 (KNFVKVYKSG…WYIKILSPED (85 aa)).

Belongs to the ARF family. Homodimers and heterodimers. In terms of tissue distribution, expressed in the whole plant.

Its subcellular location is the nucleus. In terms of biological role, auxin response factors (ARFs) are transcriptional factors that bind specifically to the DNA sequence 5'-TGTCTC-3' found in the auxin-responsive promoter elements (AuxREs). Seems to act as transcriptional activator. Formation of heterodimers with Aux/IAA proteins may alter their ability to modulate early auxin response genes expression. Regulates both stamen and gynoecium maturation. Promotes jasmonic acid production. Partially redundant with ARF6. Involved in fruit initiation. Acts as an inhibitor to stop further carpel development in the absence of fertilization and the generation of signals required to initiate fruit and seed development. The chain is Auxin response factor 8 (ARF8) from Arabidopsis thaliana (Mouse-ear cress).